Reading from the N-terminus, the 476-residue chain is Ribosomal RNA small subunit methyltransferase F (476 aa).

Residues 125 to 131, glutamate 149, aspartate 176, and aspartate 194 contribute to the S-adenosyl-L-methionine site; that span reads AAAPGSK. The Nucleophile role is filled by cysteine 247.

It belongs to the class I-like SAM-binding methyltransferase superfamily. RsmB/NOP family.

The protein localises to the cytoplasm. The enzyme catalyses cytidine(1407) in 16S rRNA + S-adenosyl-L-methionine = 5-methylcytidine(1407) in 16S rRNA + S-adenosyl-L-homocysteine + H(+). Functionally, specifically methylates the cytosine at position 1407 (m5C1407) of 16S rRNA. The polypeptide is Ribosomal RNA small subunit methyltransferase F (Aeromonas salmonicida (strain A449)).